We begin with the raw amino-acid sequence, 416 residues long: S-layer protein B (416 aa).

A signal peptide spans 1 to 20; that stretch reads MKYNLLPLILLSLLVAPLLA. Residues 310–330 are a coiled coil; the sequence is IASLNSTIQSLESQISSLSST. Residues 392–412 form a helical membrane-spanning segment; the sequence is IALAVSIIAIIISIVVLILVF.

Belongs to the Sulfolobales SlaB family. The mushroom-shaped unit cells of the Sulfolobales' S-layers may consist of three SlaB subunits and six SlaA subunits.

Its subcellular location is the secreted. The protein resides in the cell wall. It is found in the S-layer. It localises to the cell membrane. In terms of biological role, S-layer small protein. May anchor the complex to the cell membrane. This chain is S-layer protein B, found in Metallosphaera sedula (strain ATCC 51363 / DSM 5348 / JCM 9185 / NBRC 15509 / TH2).